Here is a 918-residue protein sequence, read N- to C-terminus: Alpha-scruin (918 aa).

6 Kelch repeats span residues 82–133 (VVLA…YFHR), 134–187 (RVYV…VMDE), 188–235 (RIFV…NNEG), 237–289 (IYVI…TQNK), 291–341 (IWIW…KTGA), and 342–390 (HVFI…AIPA). The segment at 398–427 (EVPTSTPSSKAKPQPGSKPTSVKYKKQPDI) is disordered. The IQ domain occupies 430-459 (RNEAAKKVQRRWRRYIEQKSITKRMQQGDS). Kelch repeat units follow at residues 590–641 (VIIG…YYRS), 642–695 (AIYI…VFND), 696–743 (VLYA…AHGG), 745–795 (IWLL…VCDN), 797–849 (IWLC…ALES), and 851–898 (LYIA…TIPP).

As to expression, sperm.

Its function is as follows. Actin bundling protein found in the acrosomal sperm process. In Limulus polyphemus (Atlantic horseshoe crab), this protein is Alpha-scruin.